We begin with the raw amino-acid sequence, 210 residues long: 3-demethoxyubiquinol 3-hydroxylase (210 aa).

Fe cation contacts are provided by E59, E89, H92, E141, E173, and H176.

The protein belongs to the COQ7 family. It depends on Fe cation as a cofactor.

Its subcellular location is the cell membrane. The catalysed reaction is a 5-methoxy-2-methyl-3-(all-trans-polyprenyl)benzene-1,4-diol + AH2 + O2 = a 3-demethylubiquinol + A + H2O. The protein operates within cofactor biosynthesis; ubiquinone biosynthesis. Its function is as follows. Catalyzes the hydroxylation of 2-nonaprenyl-3-methyl-6-methoxy-1,4-benzoquinol during ubiquinone biosynthesis. The polypeptide is 3-demethoxyubiquinol 3-hydroxylase (Marinomonas sp. (strain MWYL1)).